The primary structure comprises 435 residues: Gamma-glutamyl phosphate reductase (435 aa).

Belongs to the gamma-glutamyl phosphate reductase family.

The protein resides in the cytoplasm. The catalysed reaction is L-glutamate 5-semialdehyde + phosphate + NADP(+) = L-glutamyl 5-phosphate + NADPH + H(+). It participates in amino-acid biosynthesis; L-proline biosynthesis; L-glutamate 5-semialdehyde from L-glutamate: step 2/2. Catalyzes the NADPH-dependent reduction of L-glutamate 5-phosphate into L-glutamate 5-semialdehyde and phosphate. The product spontaneously undergoes cyclization to form 1-pyrroline-5-carboxylate. The protein is Gamma-glutamyl phosphate reductase of Xylella fastidiosa (strain M12).